A 543-amino-acid chain; its full sequence is MAKRIIYNENARRALEKGMDILCESVAVTLGPKGRNVVLEKKFGAPQIVNDGVTIAKEIELEDNIENTGVALIRQAASKTNDAAGDGTTTATVLAHAMVKEGMRNVVAGANAISLKRGIEKAAGFLVEKIAENARSVEDSTAIAQVGTISAGNDDEVGQMIANAMDKVGKEGVISLEEGKSMTTELEVTEGMRFEKGYISPYFATDTERMEAVLDEPYILLTDKKITLVQDLVPVLEQAARAGKPLLVIAEDIEKEALATLVVNRLRGVLNVAAVKAPGFGDRRKAMLEDIAVLTGGQVITEDAGLKLETAKLEMMGQARRITITKDTTTLVAEGNEADVQARCEQIRRQMDETESSYDKEKLQERLAKLAGGVAVIKVGAATETEMKDRKLRLEDAINSTKAAVEEGIVPGGGTTLAHLGPQLASWAADNLTGEELIGATIVERALTAPLKRIAENAGQNGAVIAERVREKEFNVGFDASVNEFTDMFAAGIVDPAKVTRSALQNAASIAGMVLTTECIISDKPEPKENAPTGAGMGGDFDY.

Residues 29–32 (TLGP), 86–90 (DGTTT), Gly-413, and Asp-495 each bind ATP. The disordered stretch occupies residues 524 to 543 (KPEPKENAPTGAGMGGDFDY).

Belongs to the chaperonin (HSP60) family. Forms a cylinder of 14 subunits composed of two heptameric rings stacked back-to-back. Interacts with the co-chaperonin GroES.

The protein resides in the cytoplasm. It catalyses the reaction ATP + H2O + a folded polypeptide = ADP + phosphate + an unfolded polypeptide.. Its function is as follows. Together with its co-chaperonin GroES, plays an essential role in assisting protein folding. The GroEL-GroES system forms a nano-cage that allows encapsulation of the non-native substrate proteins and provides a physical environment optimized to promote and accelerate protein folding. In Acaryochloris marina (strain MBIC 11017), this protein is Chaperonin GroEL 2.